Reading from the N-terminus, the 194-residue chain is Ras-like protein rasS (194 aa).

Residue 10–17 (GPGGVGKS) coordinates GTP. Positions 32–40 (YDPTLEDSY) match the Effector region motif. Residues 57 to 61 (DTAGQ) and 116 to 119 (NKCD) contribute to the GTP site. The segment at 168 to 194 (RQSNQHSNSQEQNTDQPIKKKKSCNLL) is disordered. The segment covering 169–180 (QSNQHSNSQEQN) has biased composition (low complexity). Cys-191 carries the post-translational modification Cysteine methyl ester. Cys-191 carries the S-geranylgeranyl cysteine lipid modification. A propeptide spans 192 to 194 (NLL) (removed in mature form).

This sequence belongs to the small GTPase superfamily. Ras family.

The protein localises to the cell membrane. It catalyses the reaction GTP + H2O = GDP + phosphate + H(+). Its function is as follows. Ras proteins bind GDP/GTP and possess intrinsic GTPase activity. This chain is Ras-like protein rasS (rasS), found in Dictyostelium discoideum (Social amoeba).